The chain runs to 293 residues: Ribonuclease HIII (293 aa).

In terms of domain architecture, RNase H type-2 spans 78 to 293; it reads LPLIGTDEVG…TEKAKKRLER (216 aa). A divalent metal cation is bound by residues D84, E85, and D187.

Belongs to the RNase HII family. RnhC subfamily. It depends on Mn(2+) as a cofactor. Requires Mg(2+) as cofactor.

The protein localises to the cytoplasm. It catalyses the reaction Endonucleolytic cleavage to 5'-phosphomonoester.. In terms of biological role, endonuclease that specifically degrades the RNA of RNA-DNA hybrids. In Streptococcus pneumoniae (strain Taiwan19F-14), this protein is Ribonuclease HIII.